The following is a 596-amino-acid chain: Interleukin-1 receptor-associated kinase 3 (596 aa).

The 66-residue stretch at 41–106 (WRGLAERLSS…RAIHLITNYG (66 aa)) folds into the Death domain. Ser-110 bears the Phosphoserine; by IRAK1 mark. One can recognise a Protein kinase domain in the interval 165-452 (FHKDFLIGEG…LESTQASLYF (288 aa)). ATP contacts are provided by residues 171–179 (IGEGEIFEV), Lys-192, 295–298 (SSAN), and Asp-311. Ser-467 carries the post-translational modification Phosphoserine. The interval 560–596 (NIDPSSEAPGHSCRSRPVESSCSSKFSWDEYEQYKKE) is disordered.

The protein belongs to the protein kinase superfamily. TKL Ser/Thr protein kinase family. Pelle subfamily. Monomer. Homodimer; disulfide-linked. May interact with IRAK4 (when phosphorylated). Interacts (when phosphorylated at Ser-110) with PIN1 (via WW domain) in response to IL33-mediated (but not TLR4 ligand LPS) dendritic cell stimulation. Expressed in eosinophils, dendritic cells and/or monocytes (at protein level). Expressed predominantly in peripheral blood lymphocytes.

The protein localises to the cytoplasm. It is found in the nucleus. Its function is as follows. Putative inactive protein kinase which regulates signaling downstream of immune receptors including IL1R and Toll-like receptors. Inhibits dissociation of IRAK1 and IRAK4 from the Toll-like receptor signaling complex by either inhibiting the phosphorylation of IRAK1 and IRAK4 or stabilizing the receptor complex. Upon IL33-induced lung inflammation, positively regulates expression of IL6, CSF3, CXCL2 and CCL5 mRNAs in dendritic cells. This chain is Interleukin-1 receptor-associated kinase 3, found in Homo sapiens (Human).